The following is a 115-amino-acid chain: MNLSLTFMTDVILALLLVMIAFWLPQLNIYTEKYSSYECGFDPMGSARLPFSMKFFLVAITFLLFDLEIALLLPLPWASQTTNLKLMLTMALLLISILAAGLAYEWSQKGLEWEE.

The next 3 membrane-spanning stretches (helical) occupy residues 5 to 25 (LTFM…FWLP), 55 to 75 (FFLV…LLPL), and 86 to 106 (LMLT…AYEW).

This sequence belongs to the complex I subunit 3 family. As to quaternary structure, core subunit of respiratory chain NADH dehydrogenase (Complex I) which is composed of 45 different subunits. Interacts with TMEM186. Interacts with TMEM242.

It localises to the mitochondrion inner membrane. The catalysed reaction is a ubiquinone + NADH + 5 H(+)(in) = a ubiquinol + NAD(+) + 4 H(+)(out). Functionally, core subunit of the mitochondrial membrane respiratory chain NADH dehydrogenase (Complex I) which catalyzes electron transfer from NADH through the respiratory chain, using ubiquinone as an electron acceptor. Essential for the catalytic activity of complex I. This Avahi unicolor (Sambirano woolly lemur) protein is NADH-ubiquinone oxidoreductase chain 3.